The primary structure comprises 199 residues: Holliday junction branch migration complex subunit RuvA (199 aa).

The interval 1–64 (MIAFLKGAVF…ENEFKLFGFL (64 aa)) is domain I. Residues 65 to 143 (DQDELRLFKT…ELKLVEVEKE (79 aa)) form a domain II region. The segment at 144–148 (QRPLL) is flexible linker. The tract at residues 148-199 (LDELMEALEILGYSRSEVLPAIMDLNRNKQLGNIVEENIKLVLKAKAQEMRR) is domain III.

This sequence belongs to the RuvA family. In terms of assembly, homotetramer. Forms an RuvA(8)-RuvB(12)-Holliday junction (HJ) complex. HJ DNA is sandwiched between 2 RuvA tetramers; dsDNA enters through RuvA and exits via RuvB. An RuvB hexamer assembles on each DNA strand where it exits the tetramer. Each RuvB hexamer is contacted by two RuvA subunits (via domain III) on 2 adjacent RuvB subunits; this complex drives branch migration. In the full resolvosome a probable DNA-RuvA(4)-RuvB(12)-RuvC(2) complex forms which resolves the HJ.

It localises to the cytoplasm. Functionally, the RuvA-RuvB-RuvC complex processes Holliday junction (HJ) DNA during genetic recombination and DNA repair, while the RuvA-RuvB complex plays an important role in the rescue of blocked DNA replication forks via replication fork reversal (RFR). RuvA specifically binds to HJ cruciform DNA, conferring on it an open structure. The RuvB hexamer acts as an ATP-dependent pump, pulling dsDNA into and through the RuvAB complex. HJ branch migration allows RuvC to scan DNA until it finds its consensus sequence, where it cleaves and resolves the cruciform DNA. The protein is Holliday junction branch migration complex subunit RuvA of Syntrophomonas wolfei subsp. wolfei (strain DSM 2245B / Goettingen).